Here is a 348-residue protein sequence, read N- to C-terminus: Holliday junction branch migration complex subunit RuvB (348 aa).

The large ATPase domain (RuvB-L) stretch occupies residues 1–183; sequence MAPQPRRLIA…FGIPIRLEYY (183 aa). Residues leucine 22, arginine 23, glycine 64, lysine 67, threonine 68, threonine 69, 130–132, arginine 173, tyrosine 183, and arginine 220 contribute to the ATP site; that span reads EDF. Residue threonine 68 participates in Mg(2+) binding. The tract at residues 184–254 is small ATPAse domain (RuvB-S); that stretch reads TVEELECIVR…VADRALRLLD (71 aa). The segment at 257–348 is head domain (RuvB-H); sequence HIGLDQMDRR…FQLFSEGGEE (92 aa). Residues arginine 293, arginine 312, and arginine 317 each contribute to the DNA site.

It belongs to the RuvB family. Homohexamer. Forms an RuvA(8)-RuvB(12)-Holliday junction (HJ) complex. HJ DNA is sandwiched between 2 RuvA tetramers; dsDNA enters through RuvA and exits via RuvB. An RuvB hexamer assembles on each DNA strand where it exits the tetramer. Each RuvB hexamer is contacted by two RuvA subunits (via domain III) on 2 adjacent RuvB subunits; this complex drives branch migration. In the full resolvosome a probable DNA-RuvA(4)-RuvB(12)-RuvC(2) complex forms which resolves the HJ.

The protein localises to the cytoplasm. The enzyme catalyses ATP + H2O = ADP + phosphate + H(+). Functionally, the RuvA-RuvB-RuvC complex processes Holliday junction (HJ) DNA during genetic recombination and DNA repair, while the RuvA-RuvB complex plays an important role in the rescue of blocked DNA replication forks via replication fork reversal (RFR). RuvA specifically binds to HJ cruciform DNA, conferring on it an open structure. The RuvB hexamer acts as an ATP-dependent pump, pulling dsDNA into and through the RuvAB complex. RuvB forms 2 homohexamers on either side of HJ DNA bound by 1 or 2 RuvA tetramers; 4 subunits per hexamer contact DNA at a time. Coordinated motions by a converter formed by DNA-disengaged RuvB subunits stimulates ATP hydrolysis and nucleotide exchange. Immobilization of the converter enables RuvB to convert the ATP-contained energy into a lever motion, pulling 2 nucleotides of DNA out of the RuvA tetramer per ATP hydrolyzed, thus driving DNA branch migration. The RuvB motors rotate together with the DNA substrate, which together with the progressing nucleotide cycle form the mechanistic basis for DNA recombination by continuous HJ branch migration. Branch migration allows RuvC to scan DNA until it finds its consensus sequence, where it cleaves and resolves cruciform DNA. This is Holliday junction branch migration complex subunit RuvB from Methylocella silvestris (strain DSM 15510 / CIP 108128 / LMG 27833 / NCIMB 13906 / BL2).